The chain runs to 541 residues: Zinc finger protein 329 (541 aa).

Position 50 is a phosphoserine (S50). C2H2-type zinc fingers lie at residues Y203–H225, Y231–H253, Y259–H281, Y287–H309, Y315–H337, Y343–H365, F371–H393, Y399–H421, Y427–H449, Y455–H477, Y483–H505, and S511–H533.

This sequence belongs to the krueppel C2H2-type zinc-finger protein family.

The protein localises to the nucleus. Functionally, may be involved in transcriptional regulation. The chain is Zinc finger protein 329 (ZNF329) from Homo sapiens (Human).